Consider the following 447-residue polypeptide: NADP-specific glutamate dehydrogenase (447 aa).

Residues Lys-92, Gln-113, and Lys-116 each contribute to the substrate site. The active-site Proton donor is the Lys-128. Gly-167 serves as a coordination point for substrate. Residues Thr-211 and Asn-242 each coordinate NADP(+). Position 380 (Ser-380) interacts with substrate.

This sequence belongs to the Glu/Leu/Phe/Val dehydrogenases family. Homohexamer.

It carries out the reaction L-glutamate + NADP(+) + H2O = 2-oxoglutarate + NH4(+) + NADPH + H(+). In terms of biological role, catalyzes the reversible oxidative deamination of glutamate to alpha-ketoglutarate and ammonia. The polypeptide is NADP-specific glutamate dehydrogenase (gdhA) (Salmonella typhimurium (strain LT2 / SGSC1412 / ATCC 700720)).